The primary structure comprises 580 residues: MLNLLILILFIVFSSPIVAAEIFVSNTEKNCPEWSQDKLQRETNSLMQQMAHWDQLYRQKGISEIDDEVYDQLMSELTHWQFCLKQAPHSDFPVEVFPDNKLVHPVAHTGLSKLKDKQEINRWLHGRLPVWLQPKIDGVAVTLVYQNGKLVSLISRGNGAEGVNWTAKSRYIPDIPQNIENAPPDLVLQGELFLHKEEHRQQLLGSDGARNRVAGLMMRKDHSSELKQIGLFIWSWPDGPAEMESKLRKLADMGFPLALRYSHKIEEPEQVQKLRMHYFEQPMLFATDGIVLKQEIEPKGNQWRSGSNSWAVAWKHPLRHQVTQVREVNFTIGRTGKISVVLGLDKVKLDDRQISRVNIGSVRRWRQLDVLPGDRVTLTLAGHGIPKLAQVVWRIKERQDIQPPDKQHYHALSCLTLTVGCEQQFNARLKWLGENLQMTGVSSGSWAMLTERKLVTDLTGWLALSAQQIAALPGIGDKRAQAIYSQFSKAKNQPFSYWMKGIGVPYMDKLSDNVYHWQQLEQKLAAAQLKQQLTVGQLKKLSDFVSDAQIKAIAEKLSVAGITGFDRENGVVVNPADMAQ.

The active-site N6-AMP-lysine intermediate is the Lys-135.

Belongs to the NAD-dependent DNA ligase family. LigB subfamily.

The catalysed reaction is NAD(+) + (deoxyribonucleotide)n-3'-hydroxyl + 5'-phospho-(deoxyribonucleotide)m = (deoxyribonucleotide)n+m + AMP + beta-nicotinamide D-nucleotide.. Its function is as follows. Catalyzes the formation of phosphodiester linkages between 5'-phosphoryl and 3'-hydroxyl groups in double-stranded DNA using NAD as a coenzyme and as the energy source for the reaction. The protein is DNA ligase B of Photorhabdus laumondii subsp. laumondii (strain DSM 15139 / CIP 105565 / TT01) (Photorhabdus luminescens subsp. laumondii).